Reading from the N-terminus, the 497-residue chain is MSLKGGTAAPAPMAPPRKWYDMTSAEFYVYVVAFMCGISIMMPINAVFSAPSYMLEYYLYATKDPFLVPKMTNFWTNVMTYYNLISMVTSLVVEPLTLLKSFRKIPMLVRLLGGLSVLIIEIIVLMVVPARGTTEAGAVATMCIAGFIGGLGTSIFESTVYGMFGAFPPSFTSIMMGGVGISGVLTSLIQIIVKAALPDTYEGVKKQSYIYYSLDVGIQAATFIALIMMRFNSFAQLHFGDLGGVKSKVDAGSLAGAGENVREPGAEATELEQYTEPAIGQIQEKNAEAHKDDPLAERELSEEESGDSRAVEAAGEAPTSNEILRATSVFSVLRSVKWMFVACGFNFLITLFLFPGIATGMFPESKWFATVAVFIFNCCDVLGRFSSAFRITWPRRYNQRWIIVAASFARVIFVPLLLLHSYHYIPSEAYGYVMQVVFGLSSGYIASMALVLGPQSKGIDNDGKRFVAGTLMGISILVGGTIGTVLSIMTQTIRETY.

Topologically, residues 1 to 26 (MSLKGGTAAPAPMAPPRKWYDMTSAE) are cytoplasmic. The chain crosses the membrane as a helical span at residues 27–47 (FYVYVVAFMCGISIMMPINAV). The Extracellular segment spans residues 48-77 (FSAPSYMLEYYLYATKDPFLVPKMTNFWTN). Residues 78 to 98 (VMTYYNLISMVTSLVVEPLTL) form a helical membrane-spanning segment. At 99-107 (LKSFRKIPM) the chain is on the cytoplasmic side. A helical membrane pass occupies residues 108 to 128 (LVRLLGGLSVLIIEIIVLMVV). Over 129–135 (PARGTTE) the chain is Extracellular. The helical transmembrane segment at 136-156 (AGAVATMCIAGFIGGLGTSIF) threads the bilayer. The Cytoplasmic segment spans residues 157-172 (ESTVYGMFGAFPPSFT). Residues 173 to 193 (SIMMGGVGISGVLTSLIQIIV) form a helical membrane-spanning segment. The Extracellular portion of the chain corresponds to 194 to 208 (KAALPDTYEGVKKQS). A helical transmembrane segment spans residues 209–229 (YIYYSLDVGIQAATFIALIMM). The Cytoplasmic segment spans residues 230-337 (RFNSFAQLHF…SVFSVLRSVK (108 aa)). Residues 286 to 299 (NAEAHKDDPLAERE) show a composition bias toward basic and acidic residues. The interval 286-316 (NAEAHKDDPLAERELSEEESGDSRAVEAAGE) is disordered. Residues 338–358 (WMFVACGFNFLITLFLFPGIA) traverse the membrane as a helical segment. Residues 359–361 (TGM) are Extracellular-facing. A helical transmembrane segment spans residues 362–382 (FPESKWFATVAVFIFNCCDVL). The Cytoplasmic segment spans residues 383–400 (GRFSSAFRITWPRRYNQR). Residues 401-421 (WIIVAASFARVIFVPLLLLHS) form a helical membrane-spanning segment. Residues 422–432 (YHYIPSEAYGY) are Extracellular-facing. A helical transmembrane segment spans residues 433–453 (VMQVVFGLSSGYIASMALVLG). Residues 454–465 (PQSKGIDNDGKR) lie on the Cytoplasmic side of the membrane. The helical transmembrane segment at 466–486 (FVAGTLMGISILVGGTIGTVL) threads the bilayer. Residues 487–497 (SIMTQTIRETY) are Extracellular-facing.

The protein belongs to the SLC29A/ENT transporter (TC 2.A.57) family.

Its subcellular location is the cell membrane. It carries out the reaction adenosine(in) = adenosine(out). It catalyses the reaction hypoxanthine(out) = hypoxanthine(in). The catalysed reaction is inosine(in) = inosine(out). The enzyme catalyses uridine(out) = uridine(in). It carries out the reaction cytidine(in) = cytidine(out). Nucleoside transporter with broad substrate specificity. Transports adenosine with high affinity. Can also transport hypoxanthine, inosine, uridine and cytidine. The polypeptide is Nucleoside transporter 1 (Crithidia fasciculata).